Consider the following 370-residue polypeptide: 3,7-dimethylxanthine N-methyltransferase CkTbS (370 aa).

Tyr-24 is a binding site for S-adenosyl-L-homocysteine. Residue Thr-31 coordinates theobromine. S-adenosyl-L-homocysteine contacts are provided by Cys-67, Asn-72, Asp-104, Leu-105, Ser-139, and Phe-140. The theobromine site is built by Tyr-157, His-160, and Trp-161. Asn-178 lines the Mg(2+) pocket. A theobromine-binding site is contributed by His-226. Residues Asp-264, Phe-266, and Asn-267 each coordinate Mg(2+). Theobromine is bound at residue Phe-322.

This sequence belongs to the methyltransferase superfamily. Type-7 methyltransferase family. Mg(2+) serves as cofactor.

The catalysed reaction is 7-methylxanthine + S-adenosyl-L-methionine = theobromine + S-adenosyl-L-homocysteine + H(+). It participates in alkaloid biosynthesis. Functionally, involved in the biosynthesis of caffeine in cv. Puer. Involved in the biosynthesis of theacrine in cv. Kucha, a caffeine-like xanthine alkaloid with diverse beneficial biological activities including anti-depressive, sedative, and hypnotic activities, improving learning and memory, increasing exercise activity, and preventing nonalcoholic fatty liver disease. Catalyzes the conversion of 7-methylxanthine (7mX) to theobromine but not able to convert paraxanthine to caffeine. In Camellia sinensis var. assamica (Assam tea), this protein is 3,7-dimethylxanthine N-methyltransferase CkTbS.